Here is a 980-residue protein sequence, read N- to C-terminus: NACHT, LRR and PYD domains-containing protein 7 (980 aa).

One can recognise a Pyrin domain in the interval 1 to 93; sequence MTSPQLEWTL…CKMAKAEMME (93 aa). Positions 104 to 123 are disordered; that stretch reads ELGDAEEDSELAKPGEKEGW. Residues 113–123 are compositionally biased toward basic and acidic residues; the sequence is ELAKPGEKEGW. The 320-residue stretch at 172-491 folds into the NACHT domain; the sequence is YTVVLHGPAG…LEKEEGEDRD (320 aa). 178–185 serves as a coordination point for ATP; it reads GPAGVGKT. 9 LRR repeats span residues 614 to 638, 674 to 697, 760 to 784, 788 to 810, 817 to 840, 845 to 868, 874 to 897, 902 to 928, and 933 to 957; these read CQDL…DFEL, NSNL…ILCD, KCNL…FFYV, NQSL…MLLY, KHFL…DLAA, SKKL…FLCE, DCKL…YLSE, ACSL…ALEN, and LKHL…VKEK.

It belongs to the NLRP family. Directly interacts with CASP1 and IL1B. In terms of tissue distribution, expressed in numerous tissues including uterus and ovary, with low levels in heart and brain. Not detected in skeletal muscle.

Inhibits CASP1/caspase-1-dependent IL1B secretion. The chain is NACHT, LRR and PYD domains-containing protein 7 (NLRP7) from Homo sapiens (Human).